We begin with the raw amino-acid sequence, 460 residues long: Citrate synthase, peroxisomal (460 aa).

Ser-21 carries the phosphoserine modification. Residues Lys-218 and Lys-239 each participate in a glycyl lysine isopeptide (Lys-Gly) (interchain with G-Cter in ubiquitin) cross-link. Active-site residues include His-293 and His-339. Residues Lys-354 and Lys-385 each participate in a glycyl lysine isopeptide (Lys-Gly) (interchain with G-Cter in ubiquitin) cross-link. Residue Asp-394 is part of the active site. A C-terminal peroxisome targeting signal (PTS1) motif is present at residues 458-460; sequence SKL.

Belongs to the citrate synthase family. Interacts with F-box protein UCC1. Post-translationally, ubiquitinated by the E3 ubiquitin-protein ligase complex SCF(UCC1), which leads to its degradation by the proteasome. Ubiquitination is prevented by oxaloacetate, suggesting the existence of an oxaloacetate-dependent positive feedback loop that stabilizes CIT2.

The protein resides in the cytoplasm. The protein localises to the peroxisome. The enzyme catalyses oxaloacetate + acetyl-CoA + H2O = citrate + CoA + H(+). The protein operates within carbohydrate metabolism; tricarboxylic acid cycle; isocitrate from oxaloacetate: step 1/2. Peroxisomal citrate synthase involved in the citrate homeostasis. Catalyzes the condensation of acetyl coenzyme A and oxaloacetate to form citrate. Citrate synthase is the rate-limiting enzyme of the tricarboxylic acid (TCA) cycle. The chain is Citrate synthase, peroxisomal from Saccharomyces cerevisiae (strain ATCC 204508 / S288c) (Baker's yeast).